Reading from the N-terminus, the 162-residue chain is Single-stranded DNA-binding protein 1 (162 aa).

Residues 5 to 110 (LNKVMLIGHL…IVCTDMQMLG (106 aa)) form the SSB domain. A disordered region spans residues 110 to 162 (GAKDSGGGTSDASYSQNRPSYSRPSRPEPSSGNYGASPSSGGAQEFEKDDLPF). Low complexity predominate over residues 122–140 (SYSQNRPSYSRPSRPEPSS). A compositionally biased stretch (polar residues) spans 141-151 (GNYGASPSSGG).

Homotetramer.

The sequence is that of Single-stranded DNA-binding protein 1 (ssb1) from Chlorobaculum tepidum (strain ATCC 49652 / DSM 12025 / NBRC 103806 / TLS) (Chlorobium tepidum).